A 317-amino-acid chain; its full sequence is Melanocyte-stimulating hormone receptor (317 aa).

The Extracellular portion of the chain corresponds to 1 to 37; it reads MPVQGSQRRLLGSLNSTPTATPHLGLAANQTGARCLE. A glycan (N-linked (GlcNAc...) asparagine) is linked at Asn-29. A helical transmembrane segment spans residues 38-63; it reads VSVPDGLFLSLGLVSLVENVLVVTAI. The Cytoplasmic segment spans residues 64 to 72; sequence AKNRNLHSP. Residues 73-93 traverse the membrane as a helical segment; that stretch reads MYCFICCLALSDLLVSGSNML. Residues 94 to 118 are Extracellular-facing; that stretch reads ETAVTLLLEAGVLAARAAVVQQLDN. Residues 119 to 140 traverse the membrane as a helical segment; it reads VIDVITCSSMLSSLCFLGAIAV. Residues 141–163 are Cytoplasmic-facing; it reads DRYISIFYALRYHSIVTLPRARR. A helical membrane pass occupies residues 164-183; it reads AVAAIWVASVLFSTLFIAYY. At 184 to 191 the chain is on the extracellular side; it reads DHAAVLLC. The helical transmembrane segment at 192-211 threads the bilayer; it reads LVIFFLAMLVLMAVLYVHML. The Cytoplasmic segment spans residues 212 to 240; sequence ARACQHAQGIARLHKRQRLAHQGFGLKGA. Residues 241–266 traverse the membrane as a helical segment; the sequence is ATLTILLGIFFLCWGPFFLHLTLIVL. Topologically, residues 267–279 are extracellular; that stretch reads CPQHPTCSCIFKN. The chain crosses the membrane as a helical span at residues 280–300; that stretch reads FNLFLALIICNAIIDPLIYAF. The Cytoplasmic segment spans residues 301 to 317; sequence RSQELRRTLKEVLLCSW. Residue Cys-315 is the site of S-palmitoyl cysteine attachment.

It belongs to the G-protein coupled receptor 1 family. As to quaternary structure, interacts with MGRN1, but does not undergo MGRN1-mediated ubiquitination; this interaction competes with GNAS-binding and thus inhibits agonist-induced cAMP production. Interacts with OPN3; the interaction results in a decrease in MC1R-mediated cAMP signaling and ultimately a decrease in melanin production in melanocytes.

The protein resides in the cell membrane. In terms of biological role, receptor for MSH (alpha, beta and gamma) and ACTH. The activity of this receptor is mediated by G proteins which activate adenylate cyclase. Mediates melanogenesis, the production of eumelanin (black/brown) and phaeomelanin (red/yellow), via regulation of cAMP signaling in melanocytes. This is Melanocyte-stimulating hormone receptor (MC1R) from Papio anubis (Olive baboon).